The sequence spans 412 residues: LL-diaminopimelate aminotransferase (412 aa).

Residues tyrosine 15 and glycine 42 each coordinate substrate. Residues tyrosine 72, 108–109 (SK), tyrosine 132, asparagine 187, tyrosine 218, and 246–248 (SFS) contribute to the pyridoxal 5'-phosphate site. Positions 109, 132, and 187 each coordinate substrate. At lysine 249 the chain carries N6-(pyridoxal phosphate)lysine. Pyridoxal 5'-phosphate is bound by residues arginine 257 and asparagine 292. 2 residues coordinate substrate: asparagine 292 and arginine 388.

The protein belongs to the class-I pyridoxal-phosphate-dependent aminotransferase family. LL-diaminopimelate aminotransferase subfamily. As to quaternary structure, homodimer. Pyridoxal 5'-phosphate serves as cofactor.

It catalyses the reaction (2S,6S)-2,6-diaminopimelate + 2-oxoglutarate = (S)-2,3,4,5-tetrahydrodipicolinate + L-glutamate + H2O + H(+). It functions in the pathway amino-acid biosynthesis; L-lysine biosynthesis via DAP pathway; LL-2,6-diaminopimelate from (S)-tetrahydrodipicolinate (aminotransferase route): step 1/1. Its function is as follows. Involved in the synthesis of meso-diaminopimelate (m-DAP or DL-DAP), required for both lysine and peptidoglycan biosynthesis. Catalyzes the direct conversion of tetrahydrodipicolinate to LL-diaminopimelate. This is LL-diaminopimelate aminotransferase from Synechocystis sp. (strain ATCC 27184 / PCC 6803 / Kazusa).